Consider the following 426-residue polypeptide: D-amino acid dehydrogenase (426 aa).

3-17 (VVVLGAGVIGVTTAW) provides a ligand contact to FAD.

Belongs to the DadA oxidoreductase family. Requires FAD as cofactor.

The enzyme catalyses a D-alpha-amino acid + A + H2O = a 2-oxocarboxylate + AH2 + NH4(+). It functions in the pathway amino-acid degradation; D-alanine degradation; NH(3) and pyruvate from D-alanine: step 1/1. Its function is as follows. Oxidative deamination of D-amino acids. This chain is D-amino acid dehydrogenase, found in Phenylobacterium zucineum (strain HLK1).